The primary structure comprises 426 residues: Maintenance of mitochondrial morphology protein 1 (426 aa).

Residues methionine 1–glycine 100 are Lumenal-facing. The helical transmembrane segment at phenylalanine 101–phenylalanine 121 threads the bilayer. Over serine 122–leucine 426 the chain is Cytoplasmic. In terms of domain architecture, SMP-LTD spans proline 194–proline 409.

The protein belongs to the MMM1 family. In terms of assembly, homodimer. Component of the ER-mitochondria encounter structure (ERMES) or MDM complex, composed of MMM1, MDM10, MDM12 and MDM34. An MMM1 homodimer associates with one molecule of MDM12 on each side in a pairwise head-to-tail manner, and the SMP-LTD domains of MMM1 and MDM12 generate a continuous hydrophobic tunnel for phospholipid trafficking.

Its subcellular location is the endoplasmic reticulum membrane. Functionally, component of the ERMES/MDM complex, which serves as a molecular tether to connect the endoplasmic reticulum (ER) and mitochondria. Components of this complex are involved in the control of mitochondrial shape and protein biogenesis, and function in nonvesicular lipid trafficking between the ER and mitochondria. The MDM12-MMM1 subcomplex functions in the major beta-barrel assembly pathway that is responsible for biogenesis of all outer membrane beta-barrel proteins, and acts in a late step after the SAM complex. The MDM10-MDM12-MMM1 subcomplex further acts in the TOM40-specific pathway after the action of the MDM12-MMM1 complex. Essential for establishing and maintaining the structure of mitochondria and maintenance of mtDNA nucleoids. The chain is Maintenance of mitochondrial morphology protein 1 from Saccharomyces cerevisiae (strain AWRI1631) (Baker's yeast).